Consider the following 81-residue polypeptide: Sulfur carrier protein TusA (81 aa).

Cys-19 (cysteine persulfide intermediate) is an active-site residue.

This sequence belongs to the sulfur carrier protein TusA family. As to quaternary structure, interacts with IscS.

It is found in the cytoplasm. It functions in the pathway tRNA modification. Its function is as follows. Sulfur carrier protein involved in sulfur trafficking in the cell. Part of a sulfur-relay system required for 2-thiolation during synthesis of 2-thiouridine of the modified wobble base 5-methylaminomethyl-2-thiouridine (mnm(5)s(2)U) in tRNA. Interacts with IscS and stimulates its cysteine desulfurase activity. Accepts an activated sulfur from IscS, which is then transferred to TusD, and thus determines the direction of sulfur flow from IscS to 2-thiouridine formation. Also appears to be involved in sulfur transfer for the biosynthesis of molybdopterin. The sequence is that of Sulfur carrier protein TusA from Cronobacter sakazakii (strain ATCC BAA-894) (Enterobacter sakazakii).